A 106-amino-acid chain; its full sequence is Transcriptional and immune response regulator (106 aa).

In terms of assembly, monomer. Interacts with NOTCH2 (via ANK repeats), the interaction inhibits the nuclear translocation of NOTCH2 N2ICD. Interacts (C-terminus) with CBY1 (C-terminus), TCIM competes with CTNNB1 for the interaction with CBY1. As to expression, ubiquitous. Expressed in thyroid papillary carcinoma. Expressed in liver, expression levels decrease in hepatocellular carcinoma. Slightly detected in normal lung, its expression is highly induced in lung cancer cells (at protein level).

The protein localises to the cytoplasm. It localises to the nucleus. It is found in the nucleolus. The protein resides in the nucleus speckle. Its function is as follows. Seems to be involved in the regulation of cell growth an differentiation, may play different and opposite roles depending on the tissue or cell type. May enhance the WNT-CTNNB1 pathway by relieving antagonistic activity of CBY1. Enhances the proliferation of follicular dendritic cells. Plays a role in the mitogen-activated MAPK2/3 signaling pathway, positively regulates G1-to-S-phase transition of the cell cycle. In endothelial cells, enhances key inflammatory mediators and inflammatory response through the modulation of NF-kappaB transcriptional regulatory activity. Involved in the regulation of heat shock response, seems to play a positive feedback with HSF1 to modulate heat-shock downstream gene expression. Plays a role in the regulation of hematopoiesis even if the mechanisms are unknown. In cancers such as thyroid or lung cancer, it has been described as promoter of cell proliferation, G1-to-S-phase transition and inhibitor of apoptosis. However, it negatively regulates self-renewal of liver cancer cells via suppresion of NOTCH2 signaling. In Homo sapiens (Human), this protein is Transcriptional and immune response regulator.